The sequence spans 319 residues: Olfactory receptor 5B21 (319 aa).

Over 1-26 the chain is Extracellular; that stretch reads MTSMENITEVTEFILLGLTDDPNLQV. N-linked (GlcNAc...) asparagine glycosylation is present at Asn6. Residues 27–47 form a helical membrane-spanning segment; that stretch reads PLLLIFLFIYLVTLIGNGGMM. The Cytoplasmic segment spans residues 48-55; sequence VIIFSDSH. Residues 56–76 traverse the membrane as a helical segment; that stretch reads LHTPMYFFLSNLSFVDLGYSS. Topologically, residues 77 to 100 are extracellular; the sequence is AVAPKMVAALQSGNKVISYNGCAA. Residues Cys98 and Cys190 are joined by a disulfide bond. A helical transmembrane segment spans residues 101–121; it reads QFFFFVGFATVECYLLASMAY. Residues 122 to 134 lie on the Cytoplasmic side of the membrane; that stretch reads DRHAAVCRPLHYT. A helical transmembrane segment spans residues 135 to 155; it reads TTMTTGVCTILTIGSYTCGFL. Residues 156–197 are Extracellular-facing; it reads NASIHAADTFKLSFCGSNKINHFFCDIPPLLALACSSTHISK. A helical transmembrane segment spans residues 198-218; sequence LVVFFVVGFNVFFTLLVIIIS. Over 219–238 the chain is Cytoplasmic; it reads YFFIYIAIQNMKSSEGRKKA. A helical membrane pass occupies residues 239 to 259; the sequence is FSTCASHLTAVSIFYGTIIFM. The Extracellular portion of the chain corresponds to 260-272; the sequence is YLQPSSGQSMDTD. The chain crosses the membrane as a helical span at residues 273 to 293; it reads KIASVFYTVVIPMLNPLIYSL. Over 294-319 the chain is Cytoplasmic; sequence RNREVKSALWKILNRFYPASFSVSRK.

It belongs to the G-protein coupled receptor 1 family.

It localises to the cell membrane. In terms of biological role, odorant receptor. This is Olfactory receptor 5B21 from Mus musculus (Mouse).